The chain runs to 390 residues: Homoserine O-succinyltransferase (390 aa).

The AB hydrolase-1 domain occupies 56-365 (NAVLICHALS…SPHGHDAFLL (310 aa)). Ser-162 functions as the Nucleophile in the catalytic mechanism. Arg-232 lines the substrate pocket. Catalysis depends on residues Asp-327 and His-360. A substrate-binding site is contributed by Asp-361.

The protein belongs to the AB hydrolase superfamily. MetX family. Homodimer.

Its subcellular location is the cytoplasm. It catalyses the reaction L-homoserine + succinyl-CoA = O-succinyl-L-homoserine + CoA. It functions in the pathway amino-acid biosynthesis; L-methionine biosynthesis via de novo pathway; O-succinyl-L-homoserine from L-homoserine: step 1/1. Transfers a succinyl group from succinyl-CoA to L-homoserine, forming succinyl-L-homoserine. In vitro, also has serine succinyl transferase activity. The chain is Homoserine O-succinyltransferase from Litchfieldella anticariensis (strain DSM 16096 / CECT 5854 / CIP 108499 / LMG 22089 / FP35) (Halomonas anticariensis).